Here is a 256-residue protein sequence, read N- to C-terminus: tRNA pseudouridine synthase A 1 (256 aa).

The active-site Nucleophile is the D53. Position 111 (Y111) interacts with substrate.

Belongs to the tRNA pseudouridine synthase TruA family. As to quaternary structure, homodimer.

The catalysed reaction is uridine(38/39/40) in tRNA = pseudouridine(38/39/40) in tRNA. Its function is as follows. Formation of pseudouridine at positions 38, 39 and 40 in the anticodon stem and loop of transfer RNAs. This Protochlamydia amoebophila (strain UWE25) protein is tRNA pseudouridine synthase A 1.